The following is a 401-amino-acid chain: Phosphoglycerate kinase (401 aa).

Residues 24 to 26 (DFN), Arg40, 63 to 66 (HFGR), Arg122, and Arg155 each bind substrate. ATP is bound by residues Lys206, Gly297, Glu328, and 357-360 (GGDS).

The protein belongs to the phosphoglycerate kinase family. Monomer.

The protein resides in the cytoplasm. It carries out the reaction (2R)-3-phosphoglycerate + ATP = (2R)-3-phospho-glyceroyl phosphate + ADP. The protein operates within carbohydrate degradation; glycolysis; pyruvate from D-glyceraldehyde 3-phosphate: step 2/5. The sequence is that of Phosphoglycerate kinase from Synechococcus sp. (strain CC9605).